Here is a 128-residue protein sequence, read N- to C-terminus: MHARKLIVVLVYILTVLVSVAVSKRYTSEKRVQNLATFKTMMRYGRGGPSPNNKENKVNIRPRADAFFLGPRYGKRSGWSPNASLVYPVSTPLCGLDEDLSCAYTGISDLYRCTPRKGESEEFTTSSN.

The first 23 residues, 1-23, serve as a signal peptide directing secretion; it reads MHARKLIVVLVYILTVLVSVAVS. The propeptide occupies 26-29; sequence YTSE. Tyrosine amide is present on tyrosine 44. The propeptide occupies 47-63; sequence GGPSPNNKENKVNIRPR. Residue tyrosine 73 is modified to Tyrosine amide. Residues 77-128 constitute a propeptide that is removed on maturation; the sequence is SGWSPNASLVYPVSTPLCGLDEDLSCAYTGISDLYRCTPRKGESEEFTTSSN.

It is found in the secreted. In terms of biological role, neuropeptides RYamide-1 and RYamide-2 are ligands for the G-protein coupled receptor RYa-R. RYamide-2 is the most potent activator of RYa-R. The polypeptide is RYamide neuropeptides (Tribolium castaneum (Red flour beetle)).